The chain runs to 589 residues: Aspartate--tRNA ligase (589 aa).

Glu172 serves as a coordination point for L-aspartate. Positions 196–199 (QLFK) are aspartate. Arg218 provides a ligand contact to L-aspartate. ATP is bound by residues 218 to 220 (RDE) and Gln227. His449 serves as a coordination point for L-aspartate. Glu483 contacts ATP. Arg490 provides a ligand contact to L-aspartate. 535–538 (GLDR) is a binding site for ATP.

The protein belongs to the class-II aminoacyl-tRNA synthetase family. Type 1 subfamily. In terms of assembly, homodimer.

It is found in the cytoplasm. The enzyme catalyses tRNA(Asp) + L-aspartate + ATP = L-aspartyl-tRNA(Asp) + AMP + diphosphate. In terms of biological role, catalyzes the attachment of L-aspartate to tRNA(Asp) in a two-step reaction: L-aspartate is first activated by ATP to form Asp-AMP and then transferred to the acceptor end of tRNA(Asp). The sequence is that of Aspartate--tRNA ligase from Actinobacillus succinogenes (strain ATCC 55618 / DSM 22257 / CCUG 43843 / 130Z).